The primary structure comprises 229 residues: Uracil-DNA glycosylase (229 aa).

Residue Asp-70 is the Proton acceptor of the active site.

It belongs to the uracil-DNA glycosylase (UDG) superfamily. UNG family.

It is found in the cytoplasm. It carries out the reaction Hydrolyzes single-stranded DNA or mismatched double-stranded DNA and polynucleotides, releasing free uracil.. Its function is as follows. Excises uracil residues from the DNA which can arise as a result of misincorporation of dUMP residues by DNA polymerase or due to deamination of cytosine. This chain is Uracil-DNA glycosylase, found in Chlamydia trachomatis serovar L2b (strain UCH-1/proctitis).